The primary structure comprises 460 residues: CCA-adding enzyme (460 aa).

2 residues coordinate ATP: S50 and R53. Positions 50 and 53 each coordinate CTP. 3 residues coordinate Mg(2+): D62, D64, and D117. The ATP site is built by H140, K159, and Y168. Residues H140, K159, and Y168 each coordinate CTP.

The protein belongs to the tRNA nucleotidyltransferase/poly(A) polymerase family. Archaeal CCA-adding enzyme subfamily. As to quaternary structure, homodimer. It depends on Mg(2+) as a cofactor.

It catalyses the reaction a tRNA precursor + 2 CTP + ATP = a tRNA with a 3' CCA end + 3 diphosphate. The catalysed reaction is a tRNA with a 3' CCA end + 2 CTP + ATP = a tRNA with a 3' CCACCA end + 3 diphosphate. Functionally, catalyzes the addition and repair of the essential 3'-terminal CCA sequence in tRNAs without using a nucleic acid template. Adds these three nucleotides in the order of C, C, and A to the tRNA nucleotide-73, using CTP and ATP as substrates and producing inorganic pyrophosphate. tRNA 3'-terminal CCA addition is required both for tRNA processing and repair. Also involved in tRNA surveillance by mediating tandem CCA addition to generate a CCACCA at the 3' terminus of unstable tRNAs. While stable tRNAs receive only 3'-terminal CCA, unstable tRNAs are marked with CCACCA and rapidly degraded. This is CCA-adding enzyme from Methanoregula boonei (strain DSM 21154 / JCM 14090 / 6A8).